The chain runs to 118 residues: Cycloviolacin-O8 (118 aa).

The signal sequence occupies residues 1-22 (MEMKNMVVGLFLIAAFALPALA). Positions 23–84 (TNFEKDFITH…THSNSINALG (62 aa)) are excised as a propeptide. Positions 85–115 (GTLPCGESCVWIPCISSVVGCSCKSKVCYKN) form a cross-link, cyclopeptide (Gly-Asn). 3 disulfides stabilise this stretch: C89–C105, C93–C107, and C98–C112. The propeptide occupies 116 to 118 (SLA).

Post-translationally, cycloviolacin-O8 is a cyclic peptide. In terms of tissue distribution, expressed in leaves, petals, petioles and roots but not in runners (at protein level).

In terms of biological role, probably participates in a plant defense mechanism. This Viola odorata (Sweet violet) protein is Cycloviolacin-O8 (Voc1).